The chain runs to 257 residues: Imidazole glycerol phosphate synthase subunit HisF (257 aa).

Active-site residues include Asp12 and Asp131.

Belongs to the HisA/HisF family. In terms of assembly, heterodimer of HisH and HisF.

The protein resides in the cytoplasm. It carries out the reaction 5-[(5-phospho-1-deoxy-D-ribulos-1-ylimino)methylamino]-1-(5-phospho-beta-D-ribosyl)imidazole-4-carboxamide + L-glutamine = D-erythro-1-(imidazol-4-yl)glycerol 3-phosphate + 5-amino-1-(5-phospho-beta-D-ribosyl)imidazole-4-carboxamide + L-glutamate + H(+). It participates in amino-acid biosynthesis; L-histidine biosynthesis; L-histidine from 5-phospho-alpha-D-ribose 1-diphosphate: step 5/9. In terms of biological role, IGPS catalyzes the conversion of PRFAR and glutamine to IGP, AICAR and glutamate. The HisF subunit catalyzes the cyclization activity that produces IGP and AICAR from PRFAR using the ammonia provided by the HisH subunit. This is Imidazole glycerol phosphate synthase subunit HisF from Paraburkholderia phymatum (strain DSM 17167 / CIP 108236 / LMG 21445 / STM815) (Burkholderia phymatum).